The chain runs to 269 residues: 4-hydroxy-tetrahydrodipicolinate reductase (269 aa).

Position 11–16 (11–16) interacts with NAD(+); that stretch reads GPIGRM. K39 provides a ligand contact to NADP(+). Residues 101–103 and 125–128 contribute to the NAD(+) site; these read GTT and ASNF. H158 serves as the catalytic Proton donor/acceptor. Residue H159 coordinates (S)-2,3,4,5-tetrahydrodipicolinate. K162 serves as the catalytic Proton donor. 168–169 serves as a coordination point for (S)-2,3,4,5-tetrahydrodipicolinate; it reads GT.

The protein belongs to the DapB family. In terms of assembly, homotetramer.

It localises to the cytoplasm. It carries out the reaction (S)-2,3,4,5-tetrahydrodipicolinate + NAD(+) + H2O = (2S,4S)-4-hydroxy-2,3,4,5-tetrahydrodipicolinate + NADH + H(+). The enzyme catalyses (S)-2,3,4,5-tetrahydrodipicolinate + NADP(+) + H2O = (2S,4S)-4-hydroxy-2,3,4,5-tetrahydrodipicolinate + NADPH + H(+). The protein operates within amino-acid biosynthesis; L-lysine biosynthesis via DAP pathway; (S)-tetrahydrodipicolinate from L-aspartate: step 4/4. Its function is as follows. Catalyzes the conversion of 4-hydroxy-tetrahydrodipicolinate (HTPA) to tetrahydrodipicolinate. The chain is 4-hydroxy-tetrahydrodipicolinate reductase from Buchnera aphidicola subsp. Acyrthosiphon pisum (strain APS) (Acyrthosiphon pisum symbiotic bacterium).